The sequence spans 353 residues: MVQQPPQGGSRKISFNVSEQYEIQDVIGEGAYGVVCSAIHKPSGQKVAIKKITPFDHSMFCLRTLREMKLLRYFNHENIISILDIQRPRNYESFNEVYLIQELMETDMHRVIRTQDLSDDHCQYFIYQTLRALKAMHSANVLHRDLKPSNLLLNANCDLKVCDFGLARSAASTDDNSGFMTEYVATRWYRAPEIMLTFKEYTKAIDVWSVGCILAEMLSGKPLFPGKDYHHQLTLILDVLGTPTMEDYYGIKSRRAREYIRSLPFKKKIPFKALFPKSNELALDLLEKLLAFNPAKRITVEEALRHPYLEPYHDPDDEPTAPPIPEGFFDFDKNKDALSKEQLKTLIYEEIMR.

A Protein kinase domain is found at 21-309 (YEIQDVIGEG…VEEALRHPYL (289 aa)). Residues 27–35 (IGEGAYGVV) and lysine 50 each bind ATP. The active-site Proton acceptor is aspartate 145.

Belongs to the protein kinase superfamily. Ser/Thr protein kinase family. MAP kinase subfamily. Mg(2+) is required as a cofactor.

It is found in the nucleus. The enzyme catalyses L-seryl-[protein] + ATP = O-phospho-L-seryl-[protein] + ADP + H(+). The catalysed reaction is L-threonyl-[protein] + ATP = O-phospho-L-threonyl-[protein] + ADP + H(+). Its activity is regulated as follows. Activated by threonine and tyrosine phosphorylation. In terms of biological role, mitogen-activated protein kinase (MAPK) that plays a role in conidiation and regulation of secondary metabolite biosynthesis. Acts as a repressor of dihydroxynaphthalene (DHN)-melanin production. This Aspergillus fumigatus (strain CBS 144.89 / FGSC A1163 / CEA10) (Neosartorya fumigata) protein is Mitogen-activated protein kinase mpkB.